Reading from the N-terminus, the 1012-residue chain is Formate dehydrogenase 2 subunit alpha (cytochrome c-553) (1012 aa).

Residues 1–33 constitute a signal peptide (tat-type signal); the sequence is MKTTRRSFLKLVGVSVVGLSLGQLGFDLEDAQA. Residues 43 to 99 enclose the 4Fe-4S Mo/W bis-MGD-type domain; that stretch reads AKEVGTVCPFCSVCCQVIAYVRNGKLVSTEGDPDFPVNEGALCAKGAALFSMYTNPH. [4Fe-4S] cluster contacts are provided by cysteine 50, cysteine 53, cysteine 57, and cysteine 85. Residue selenocysteine 189 participates in W-bis(molybdopterin guanine dinucleotide) binding. A non-standard amino acid (selenocysteine) is located at residue selenocysteine 189. 5 residues coordinate Ca(2+): threonine 389, arginine 391, lysine 394, leucine 424, and asparagine 426.

It belongs to the prokaryotic molybdopterin-containing oxidoreductase family. In terms of assembly, heterotrimer of cytochrome c3 FDH2C and formate dehydrogenase FDH2 alpha and beta subunits that forms the FdhABC(3) complex. [4Fe-4S] cluster serves as cofactor. It depends on W-bis(molybdopterin guanine dinucleotide) as a cofactor. Predicted to be exported by the Tat system. The position of the signal peptide cleavage has not been experimentally proven.

It is found in the periplasm. It catalyses the reaction 2 Fe(III)-[cytochrome c553] + formate = 2 Fe(II)-[cytochrome c553] + CO2 + H(+). Functionally, alpha chain of the formate dehydrogenase (FDH) that catalyzes the reversible two-electron oxidation of formate to carbon dioxide. The alpha subunit of formate dehydrogenase forms the active site. This Nitratidesulfovibrio vulgaris (strain ATCC 29579 / DSM 644 / CCUG 34227 / NCIMB 8303 / VKM B-1760 / Hildenborough) (Desulfovibrio vulgaris) protein is Formate dehydrogenase 2 subunit alpha (cytochrome c-553).